Reading from the N-terminus, the 396-residue chain is L-lactate dehydrogenase (396 aa).

The FMN hydroxy acid dehydrogenase domain maps to 1 to 380 (MIISAASDYR…TQDSLVQGLG (380 aa)). Tyrosine 24 lines the substrate pocket. 2 residues coordinate FMN: serine 106 and glutamine 127. Tyrosine 129 contributes to the substrate binding site. Threonine 155 provides a ligand contact to FMN. Position 164 (arginine 164) interacts with substrate. Lysine 251 contacts FMN. The active-site Proton acceptor is histidine 275. Arginine 278 lines the substrate pocket. 306-330 (DSGIRNGLDVVRMIALGADTVLLGR) provides a ligand contact to FMN.

The protein belongs to the FMN-dependent alpha-hydroxy acid dehydrogenase family. The cofactor is FMN.

It localises to the cell inner membrane. The enzyme catalyses (S)-lactate + A = pyruvate + AH2. Its function is as follows. Catalyzes the conversion of L-lactate to pyruvate. Is coupled to the respiratory chain. The polypeptide is L-lactate dehydrogenase (Shigella flexneri serotype 5b (strain 8401)).